Reading from the N-terminus, the 264-residue chain is Acyl-[acyl-carrier-protein]--UDP-N-acetylglucosamine O-acyltransferase (264 aa).

This sequence belongs to the transferase hexapeptide repeat family. LpxA subfamily. As to quaternary structure, homotrimer.

It is found in the cytoplasm. The catalysed reaction is a (3R)-hydroxyacyl-[ACP] + UDP-N-acetyl-alpha-D-glucosamine = a UDP-3-O-[(3R)-3-hydroxyacyl]-N-acetyl-alpha-D-glucosamine + holo-[ACP]. Its pathway is glycolipid biosynthesis; lipid IV(A) biosynthesis; lipid IV(A) from (3R)-3-hydroxytetradecanoyl-[acyl-carrier-protein] and UDP-N-acetyl-alpha-D-glucosamine: step 1/6. Involved in the biosynthesis of lipid A, a phosphorylated glycolipid that anchors the lipopolysaccharide to the outer membrane of the cell. The sequence is that of Acyl-[acyl-carrier-protein]--UDP-N-acetylglucosamine O-acyltransferase from Glaesserella parasuis serovar 5 (strain SH0165) (Haemophilus parasuis).